The following is a 912-amino-acid chain: Protein translocase subunit SecA (912 aa).

ATP contacts are provided by residues Gln-87, 105–109 (GEGKT), and Asp-499. 4 residues coordinate Zn(2+): Cys-897, Cys-899, Cys-908, and His-909.

The protein belongs to the SecA family. In terms of assembly, monomer and homodimer. Part of the essential Sec protein translocation apparatus which comprises SecA, SecYEG and auxiliary proteins SecDF-YajC and YidC. Zn(2+) is required as a cofactor.

It localises to the cell inner membrane. Its subcellular location is the cytoplasm. It carries out the reaction ATP + H2O + cellular proteinSide 1 = ADP + phosphate + cellular proteinSide 2.. Functionally, part of the Sec protein translocase complex. Interacts with the SecYEG preprotein conducting channel. Has a central role in coupling the hydrolysis of ATP to the transfer of proteins into and across the cell membrane, serving both as a receptor for the preprotein-SecB complex and as an ATP-driven molecular motor driving the stepwise translocation of polypeptide chains across the membrane. The chain is Protein translocase subunit SecA from Rhizorhabdus wittichii (strain DSM 6014 / CCUG 31198 / JCM 15750 / NBRC 105917 / EY 4224 / RW1) (Sphingomonas wittichii).